Consider the following 298-residue polypeptide: Deleted in azoospermia-like (298 aa).

Residues 1–27 (MSATTSEAPNSAVSREASTQSSSATTS) are disordered. A compositionally biased stretch (low complexity) spans 11–27 (SAVSREASTQSSSATTS). Residues 40 to 115 (NTVFVGGIDV…KKLKLGPAIR (76 aa)) enclose the RRM domain. The tract at residues 80–132 (KGYGFVSFYNDVDVQKIVESQINFHGKKLKLGPAIRKQNLCTYHVQPRPLIFN) is homodimerization. Residues 167–190 (AYPPYPSSPVQVITGYQLPVYNYQ) form the DAZ domain. Phosphotyrosine is present on Tyr276.

It belongs to the RRM DAZ family. Homodimer and heterodimer. Forms a heterodimer with DAZ. Interacts with BOLL, DAZAP1 and DAZAP2. Interacts with PUM2. Multiple DAZL RRMs can bind to a single RNA containing multiple GUU triplets. As to expression, expressed predominantly in testis with lower levels in ovary. In testis, it is expressed in pachytene spermatocytes and at lower level in type-B spermatogonia, preleptotene and zygotene spermatocytes. In ovary, it is expressed in maturing follicles. In embryonic and prepuberal ovary, it is expressed in the oocyte and follicular cells.

Its subcellular location is the cytoplasm. RNA-binding protein, which is essential for gametogenesis in both males and females. Plays a central role during spermatogenesis. Acts by binding to the 3'-UTR of mRNA, specifically recognizing GUU triplets, and thereby regulating the translation of key transcripts. The polypeptide is Deleted in azoospermia-like (Dazl) (Mus musculus (Mouse)).